We begin with the raw amino-acid sequence, 349 residues long: PhoH-like protein (349 aa).

147-154 (GPAGTGKT) provides a ligand contact to ATP.

It belongs to the PhoH family.

It localises to the cytoplasm. The sequence is that of PhoH-like protein from Mycobacterium leprae (strain TN).